The primary structure comprises 286 residues: ATP synthase gamma chain (286 aa).

Belongs to the ATPase gamma chain family. As to quaternary structure, F-type ATPases have 2 components, CF(1) - the catalytic core - and CF(0) - the membrane proton channel. CF(1) has five subunits: alpha(3), beta(3), gamma(1), delta(1), epsilon(1). CF(0) has three main subunits: a, b and c.

It is found in the cell inner membrane. Its function is as follows. Produces ATP from ADP in the presence of a proton gradient across the membrane. The gamma chain is believed to be important in regulating ATPase activity and the flow of protons through the CF(0) complex. The protein is ATP synthase gamma chain of Shewanella piezotolerans (strain WP3 / JCM 13877).